The following is a 450-amino-acid chain: Chitobiosyldiphosphodolichol beta-mannosyltransferase (450 aa).

Residues 1 to 13 (MSWIQIPWSWVVT) are Lumenal-facing. The helical transmembrane segment at 14–34 (LIVTYLSLPLIIYYLVPYIFY) threads the bilayer. At 35-106 (GNKSSKKRII…PTLTLQGNKR (72 aa)) the chain is on the cytoplasmic side. The segment at residues 107–127 (SIIFLVKKVLFQVSAIIAQLW) is an intramembrane region (helical). Topologically, residues 128 to 450 (ELRGSNYMLI…SAMQELKLVA (323 aa)) are cytoplasmic.

Belongs to the glycosyltransferase group 1 family.

Its subcellular location is the endoplasmic reticulum membrane. The enzyme catalyses an N,N'-diacetylchitobiosyl-diphospho-di-trans,poly-cis-dolichol + GDP-alpha-D-mannose = a beta-D-Man-(1-&gt;4)-beta-D-GlcNAc-(1-&gt;4)-alpha-D-GlcNAc-diphospho-di-trans,poly-cis-dolichol + GDP + H(+). The protein operates within protein modification; protein glycosylation. Participates in the formation of the lipid-linked precursor oligosaccharide for N-glycosylation. Involved in assembling the dolichol-pyrophosphate-GlcNAc(2)-Man(5) intermediate on the cytoplasmic surface of the ER. This is Chitobiosyldiphosphodolichol beta-mannosyltransferase (ALG1) from Candida glabrata (strain ATCC 2001 / BCRC 20586 / JCM 3761 / NBRC 0622 / NRRL Y-65 / CBS 138) (Yeast).